A 344-amino-acid chain; its full sequence is Tetraacyldisaccharide 4'-kinase (344 aa).

Residue 65-72 (HAGGTGKT) participates in ATP binding.

The protein belongs to the LpxK family.

It carries out the reaction a lipid A disaccharide + ATP = a lipid IVA + ADP + H(+). It functions in the pathway glycolipid biosynthesis; lipid IV(A) biosynthesis; lipid IV(A) from (3R)-3-hydroxytetradecanoyl-[acyl-carrier-protein] and UDP-N-acetyl-alpha-D-glucosamine: step 6/6. Functionally, transfers the gamma-phosphate of ATP to the 4'-position of a tetraacyldisaccharide 1-phosphate intermediate (termed DS-1-P) to form tetraacyldisaccharide 1,4'-bis-phosphate (lipid IVA). The sequence is that of Tetraacyldisaccharide 4'-kinase from Neisseria meningitidis serogroup A / serotype 4A (strain DSM 15465 / Z2491).